A 79-amino-acid chain; its full sequence is Acyl carrier protein (79 aa).

A Carrier domain is found at 2–77; that stretch reads ESIEQRVKKI…QAIDYINSHG (76 aa). Position 37 is an O-(pantetheine 4'-phosphoryl)serine (Ser-37).

This sequence belongs to the acyl carrier protein (ACP) family. Post-translationally, 4'-phosphopantetheine is transferred from CoA to a specific serine of apo-ACP by AcpS. This modification is essential for activity because fatty acids are bound in thioester linkage to the sulfhydryl of the prosthetic group.

The protein resides in the cytoplasm. It participates in lipid metabolism; fatty acid biosynthesis. Carrier of the growing fatty acid chain in fatty acid biosynthesis. The chain is Acyl carrier protein from Bordetella avium (strain 197N).